A 347-amino-acid polypeptide reads, in one-letter code: Ribosomal RNA small subunit methyltransferase C (347 aa).

This sequence belongs to the methyltransferase superfamily. RsmC family. In terms of assembly, monomer.

It is found in the cytoplasm. It catalyses the reaction guanosine(1207) in 16S rRNA + S-adenosyl-L-methionine = N(2)-methylguanosine(1207) in 16S rRNA + S-adenosyl-L-homocysteine + H(+). Its function is as follows. Specifically methylates the guanine in position 1207 of 16S rRNA in the 30S particle. In Serratia proteamaculans (strain 568), this protein is Ribosomal RNA small subunit methyltransferase C.